The primary structure comprises 492 residues: Probable cytosol aminopeptidase (492 aa).

Mn(2+) contacts are provided by Lys-262 and Asp-267. Residue Lys-274 is part of the active site. Asp-286, Asp-345, and Glu-347 together coordinate Mn(2+). Arg-349 is an active-site residue.

This sequence belongs to the peptidase M17 family. It depends on Mn(2+) as a cofactor.

The protein resides in the cytoplasm. The catalysed reaction is Release of an N-terminal amino acid, Xaa-|-Yaa-, in which Xaa is preferably Leu, but may be other amino acids including Pro although not Arg or Lys, and Yaa may be Pro. Amino acid amides and methyl esters are also readily hydrolyzed, but rates on arylamides are exceedingly low.. It carries out the reaction Release of an N-terminal amino acid, preferentially leucine, but not glutamic or aspartic acids.. Functionally, presumably involved in the processing and regular turnover of intracellular proteins. Catalyzes the removal of unsubstituted N-terminal amino acids from various peptides. This Acaryochloris marina (strain MBIC 11017) protein is Probable cytosol aminopeptidase.